A 302-amino-acid chain; its full sequence is Methionyl-tRNA formyltransferase (302 aa).

109-112 is a (6S)-5,6,7,8-tetrahydrofolate binding site; the sequence is SILP.

Belongs to the Fmt family.

The catalysed reaction is L-methionyl-tRNA(fMet) + (6R)-10-formyltetrahydrofolate = N-formyl-L-methionyl-tRNA(fMet) + (6S)-5,6,7,8-tetrahydrofolate + H(+). Attaches a formyl group to the free amino group of methionyl-tRNA(fMet). The formyl group appears to play a dual role in the initiator identity of N-formylmethionyl-tRNA by promoting its recognition by IF2 and preventing the misappropriation of this tRNA by the elongation apparatus. In Campylobacter hominis (strain ATCC BAA-381 / DSM 21671 / CCUG 45161 / LMG 19568 / NCTC 13146 / CH001A), this protein is Methionyl-tRNA formyltransferase.